The sequence spans 452 residues: DNA primase DnaG (452 aa).

One can recognise a Toprim domain in the interval 172–248; the sequence is DTVIIVEGRA…DIDYIARAPP (77 aa). Mg(2+) is bound by residues Glu178, Asp222, and Asp224. The interval 289–320 is disordered; that stretch reads KKQIEQAQVQPSAAPTSPQPQPESTQPTQPIQ. The span at 294–320 shows a compositional bias: low complexity; sequence QAQVQPSAAPTSPQPQPESTQPTQPIQ.

It belongs to the archaeal DnaG primase family. Forms a ternary complex with MCM helicase and DNA. Component of the archaeal exosome complex. Mg(2+) serves as cofactor.

It catalyses the reaction ssDNA + n NTP = ssDNA/pppN(pN)n-1 hybrid + (n-1) diphosphate.. Functionally, RNA polymerase that catalyzes the synthesis of short RNA molecules used as primers for DNA polymerase during DNA replication. Also part of the exosome, which is a complex involved in RNA degradation. Acts as a poly(A)-binding protein that enhances the interaction between heteromeric, adenine-rich transcripts and the exosome. This Caldivirga maquilingensis (strain ATCC 700844 / DSM 13496 / JCM 10307 / IC-167) protein is DNA primase DnaG.